We begin with the raw amino-acid sequence, 749 residues long: MQTSETGSDTGSTVTLQTSVASQAAVPTQVVQQVPVQQQVQQVQTVQQVQHVYPAQVQYVEGSDTVYTNGAIRTTTYPYTETQMYSQNTGGNYFDTQGSSAQVTTVVSSHSMVGTGGIQMGVTGGQLISSSGGTYLIGNSMENSGHSVTHTTRASPATIEMAIETLQKSDGLSTHRSSLLNSHLQWLLDNYETAEGVSLPRSTLYDHYLRHCQEHKLDPVNAASFGKLIRSIFMGLRTRRLGTRGNSKYHYYGIRVKPDSPLNRLQEDMQYMAMRQQPMQQKQRYKPMQKVDGVADGFTGSGQQTGTSVEQTVIAQSQHHQQFLDASRALPEFGEVEISSLPDGTTFEDIKSLQSLYREHCEAILDVVVNLQFSLIEKLWQTFWRYSPSTPTDGTTITESSNLSEIESRLPKAKLITLCKHESILKWMCNCDHGMYQALVEILIPDVLRPIPSALTQAIRNFAKSLEGWLSNAMNNIPQRMIQTKVAAVSAFAQTLRRYTSLNHLAQAARAVLQNTSQINQMLNDLNRVDFANVQEQASWVCQCDDNMVQRLETDFKMTLQQQSTLEQWAAWLDNVMMQALKPYEGRPSFPKAARQFLLKWSFYSSMVIRDLTLRSAASFGSFHLIRLLYDEYMFYLVEHRVAQATGETPIAVMGEFGDLNAVSPGNLDKDEGSEVESEMDEELDDSSEPQAKREKTELSQAFPVGCMQPVLETGVQPSLLNPIHSEHIVTSTQTIRQCSATGNTYTAV.

Positions His183–Pro258 form a DNA-binding region, RFX-type winged-helix. Residues Val663–Leu699 form a disordered region. Over residues Ser674–Ser688 the composition is skewed to acidic residues.

It belongs to the RFX family. In terms of assembly, heterodimer; heterodimerizes with RFX1 and RFX2, and RFX6.

Its subcellular location is the nucleus. Functionally, transcription factor required for ciliogenesis and islet cell differentiation during endocrine pancreas development. Essential for the differentiation of nodal monocilia and left-right asymmetry specification during embryogenesis. Required for the biogenesis of motile cilia by governing growth and beating efficiency of motile cells. Also required for ciliated ependymal cell differentiation. Regulates the expression of genes involved in ciliary assembly (DYNC2LI1, FOXJ1 and BBS4) and genes involved in ciliary motility (DNAH11, DNAH9 and DNAH5). Together with RFX6, participates in the differentiation of 4 of the 5 islet cell types during endocrine pancreas development, with the exception of pancreatic PP (polypeptide-producing) cells. Regulates transcription by forming a heterodimer with another RFX protein and binding to the X-box in the promoter of target genes. Represses transcription of MAP1A in non-neuronal cells but not in neuronal cells. The sequence is that of Transcription factor RFX3 (RFX3) from Macaca fascicularis (Crab-eating macaque).